Here is a 106-residue protein sequence, read N- to C-terminus: Nucleoid-associated protein Exig_0019 (106 aa).

A compositionally biased stretch (low complexity) spans 1–16 (MRGMGNMNNMMKQMQK). A disordered region spans residues 1-23 (MRGMGNMNNMMKQMQKMQKDMAK).

This sequence belongs to the YbaB/EbfC family. In terms of assembly, homodimer.

The protein resides in the cytoplasm. Its subcellular location is the nucleoid. Functionally, binds to DNA and alters its conformation. May be involved in regulation of gene expression, nucleoid organization and DNA protection. This Exiguobacterium sibiricum (strain DSM 17290 / CCUG 55495 / CIP 109462 / JCM 13490 / 255-15) protein is Nucleoid-associated protein Exig_0019.